The sequence spans 689 residues: MIDRYTHQQLRIGLVSPQQISTWSKKILPNGEIVGEVTKPYTFHYKTNKPEKDGLFCERIFGPIKSGICACGNYRVIGDEKEDPQFCEQCGVEFVDSRIRRYQMGYIKLAYPVMHVWYLKRLPSYIVTLLDKPLNELEDLVYCNFYFARPIDKKPTFLRLRGLLEYEIQPWKYRIPIFFTTRSFDTFRNREMSTGGGSIRQQLANLDLRIIIDYSLVEWKELEEEEPTGNEWEDRKVGRRKDFLLRRMELAKHFIRTNIEPKWMVLRLLPVLPPELRPIYHIDEDKLVTSDINEIYRRIIYRNNTLTDLLTTSIATPEELIISQEKLLQEAVDALLDNGICGQPMRDDHNRVYKSLSDVIEGKEGRVRETLLGKRVDYSGRSVIVVGPSLSLHRCGLPREIAIELFQAFVIRDLIRKHLASNIGVAKSQIRKKKPIVWEILQEILDDHPVLLNRAPTLHRLGIQAFLPVLVEGRAICLHPLVCKGFNADFDGDQMAVHVPLSLEAQAEARLLMFSHMNLLSPTIGDPISAPTQDMLSGLYVLTSGNRRGICVNRYNPCNRRNYQNEDNNYKYTKKKEPFFCNPYDAIGAYRQKRINLGSPLWLRWRLDQRVIAAREVPIEIHYESVGTYYEIYGHYLIVRSIKKEILYIYIRTTLGHISLYREIEEAIQGFWQGCCNSMLPTGIRVSPG.

Positions 69, 71, 87, and 90 each coordinate Zn(2+). Positions 489, 491, and 493 each coordinate Mg(2+).

The protein belongs to the RNA polymerase beta' chain family. RpoC1 subfamily. In plastids the minimal PEP RNA polymerase catalytic core is composed of four subunits: alpha, beta, beta', and beta''. When a (nuclear-encoded) sigma factor is associated with the core the holoenzyme is formed, which can initiate transcription. Mg(2+) is required as a cofactor. It depends on Zn(2+) as a cofactor.

Its subcellular location is the plastid. It is found in the chloroplast. It catalyses the reaction RNA(n) + a ribonucleoside 5'-triphosphate = RNA(n+1) + diphosphate. Its function is as follows. DNA-dependent RNA polymerase catalyzes the transcription of DNA into RNA using the four ribonucleoside triphosphates as substrates. The polypeptide is DNA-directed RNA polymerase subunit beta' (Lactuca sativa (Garden lettuce)).